The primary structure comprises 232 residues: Ribonuclease 3 (232 aa).

The RNase III domain occupies 6–133; it reads FNDIENRLGV…VIAAVYLDKG (128 aa). Residue glutamate 46 coordinates Mg(2+). The active site involves aspartate 50. Residues aspartate 119 and glutamate 122 each contribute to the Mg(2+) site. Glutamate 122 is an active-site residue. The region spanning 160–229 is the DRBM domain; it reads DFKTKLQELL…AKEALKRLEK (70 aa).

It belongs to the ribonuclease III family. Homodimer. The cofactor is Mg(2+).

It is found in the cytoplasm. It carries out the reaction Endonucleolytic cleavage to 5'-phosphomonoester.. Its function is as follows. Digests double-stranded RNA. Involved in the processing of primary rRNA transcript to yield the immediate precursors to the large and small rRNAs (23S and 16S). Processes some mRNAs, and tRNAs when they are encoded in the rRNA operon. Processes pre-crRNA and tracrRNA of type II CRISPR loci if present in the organism. In Clostridium botulinum (strain Alaska E43 / Type E3), this protein is Ribonuclease 3.